A 624-amino-acid chain; its full sequence is MKGQETRGFQSEVKQLLHLMIHSLYSNKEIFLRELISNASDAADKLRFRALSNPDLYEGDGELRVRVSFDKDKRTLTIADNGVGMNRDEVIDHLGTIAKSGTKSFLESMGSDQAKDSQLIGQFGVGFYSAFIVADKVTVRTRAAGDKPENGVFWESAGEGEYTVADITKNDRGTEITLHLREGEDEFLDDWRVRSIISKYSDHIALPVEIEKREEKDGETVISWEKINKAQALWTRNKSEIKDDEYNEFYKHIAHDFTDPLTWSHNRVEGKQEYTSLLYIPSQAPWDLWNRDHKHGLKLYVQRVFIMDDAEQFMPNYLRFVRGLIDSNDLPLNVSREILQDSTVTRNLRSALTKRVLQMLEKLAKDDAEKYQTFWKQFGLVLKEGPAEDHANQEAIAKLLRFASTHTDSSAQTVSLEDYVSRMKEGQEKIYYITADSYAAAKNSPHLELLRKKGIEVLLLSDRIDEWMMNYLTEFDGKAFQSVAKADESIEKLADEVDENAKEAEKALEPFVERVKTLLGDRVKEVRLTHRLTDTPAIVTTDADEMSTQMAKLFAAAGQSVPEVKYIFELNPDHVLVKRTADTEDEAQFKEWVELLLDQALFAERGTLEDPNQFIRRMNQLLVS.

The tract at residues 1–336 (MKGQETRGFQ…SNDLPLNVSR (336 aa)) is a; substrate-binding. A b region spans residues 337–552 (EILQDSTVTR…ADEMSTQMAK (216 aa)). A c region spans residues 553–624 (LFAAAGQSVP…IRRMNQLLVS (72 aa)).

The protein belongs to the heat shock protein 90 family. Homodimer.

The protein resides in the cytoplasm. Functionally, molecular chaperone. Has ATPase activity. The protein is Chaperone protein HtpG of Salmonella paratyphi B (strain ATCC BAA-1250 / SPB7).